We begin with the raw amino-acid sequence, 188 residues long: Transcription factor FapR (188 aa).

The protein belongs to the FapR family.

Its function is as follows. Transcriptional factor involved in regulation of membrane lipid biosynthesis by repressing genes involved in fatty acid and phospholipid metabolism. The sequence is that of Transcription factor FapR from Bacillus velezensis (strain DSM 23117 / BGSC 10A6 / LMG 26770 / FZB42) (Bacillus amyloliquefaciens subsp. plantarum).